The primary structure comprises 37 residues: MKVNPSVKPICDKCRVIRRHGRVMVICQDPRHKQRQG.

The protein belongs to the bacterial ribosomal protein bL36 family.

The sequence is that of Large ribosomal subunit protein bL36 from Mycobacteroides abscessus (strain ATCC 19977 / DSM 44196 / CCUG 20993 / CIP 104536 / JCM 13569 / NCTC 13031 / TMC 1543 / L948) (Mycobacterium abscessus).